The following is a 449-amino-acid chain: GTPase Der (449 aa).

2 EngA-type G domains span residues 2-169 (FTVA…QLPP) and 180-355 (VRFC…EQLT). Residues 8–15 (GRPNVGKS), 55–59 (DTGGL), 118–121 (NKSE), 186–193 (GKPNVGKS), 233–237 (DTAGI), and 298–301 (NKWD) contribute to the GTP site. The region spanning 356–440 (KKISTSLLND…PITLYFKSKN (85 aa)) is the KH-like domain.

The protein belongs to the TRAFAC class TrmE-Era-EngA-EngB-Septin-like GTPase superfamily. EngA (Der) GTPase family. In terms of assembly, associates with the 50S ribosomal subunit.

GTPase that plays an essential role in the late steps of ribosome biogenesis. This Mycoplasma pneumoniae (strain ATCC 29342 / M129 / Subtype 1) (Mycoplasmoides pneumoniae) protein is GTPase Der.